The chain runs to 133 residues: FPRL1 inhibitory protein (133 aa).

A signal peptide spans 1–28 (MKKNITKTIIASTVIAAGLLTQTNDAKA).

It belongs to the CHIPS/FLIPr family.

The protein resides in the secreted. In terms of biological role, may be involved in countering the first line of host defense mechanisms. Impairs the leukocyte response to FPRL1 agonists by binding directly to host FPRL1. The sequence is that of FPRL1 inhibitory protein (flr) from Staphylococcus aureus (strain USA300).